The chain runs to 205 residues: Methylthioribulose-1-phosphate dehydratase (205 aa).

Cys75 contributes to the substrate binding site. Zn(2+) contacts are provided by His93 and His95. The Proton donor/acceptor role is filled by Glu116. A Zn(2+)-binding site is contributed by His171.

This sequence belongs to the aldolase class II family. MtnB subfamily. It depends on Zn(2+) as a cofactor.

It is found in the cytoplasm. The enzyme catalyses 5-(methylsulfanyl)-D-ribulose 1-phosphate = 5-methylsulfanyl-2,3-dioxopentyl phosphate + H2O. Its pathway is amino-acid biosynthesis; L-methionine biosynthesis via salvage pathway; L-methionine from S-methyl-5-thio-alpha-D-ribose 1-phosphate: step 2/6. Its function is as follows. Catalyzes the dehydration of methylthioribulose-1-phosphate (MTRu-1-P) into 2,3-diketo-5-methylthiopentyl-1-phosphate (DK-MTP-1-P). In Kluyveromyces lactis (strain ATCC 8585 / CBS 2359 / DSM 70799 / NBRC 1267 / NRRL Y-1140 / WM37) (Yeast), this protein is Methylthioribulose-1-phosphate dehydratase.